The sequence spans 166 residues: Endoribonuclease YbeY (166 aa).

The Zn(2+) site is built by His132, His136, and His142.

The protein belongs to the endoribonuclease YbeY family. It depends on Zn(2+) as a cofactor.

Its subcellular location is the cytoplasm. Its function is as follows. Single strand-specific metallo-endoribonuclease involved in late-stage 70S ribosome quality control and in maturation of the 3' terminus of the 16S rRNA. This is Endoribonuclease YbeY from Clostridium botulinum (strain Loch Maree / Type A3).